The primary structure comprises 632 residues: tRNA uridine 5-carboxymethylaminomethyl modification enzyme MnmG (632 aa).

FAD contacts are provided by residues 15–20 (GAGHAG), I127, and S182. 276-290 (GPRYCPSIEDKIVRF) contributes to the NAD(+) binding site. Residue Q373 coordinates FAD.

This sequence belongs to the MnmG family. Homodimer. Heterotetramer of two MnmE and two MnmG subunits. Requires FAD as cofactor.

The protein localises to the cytoplasm. Its function is as follows. NAD-binding protein involved in the addition of a carboxymethylaminomethyl (cmnm) group at the wobble position (U34) of certain tRNAs, forming tRNA-cmnm(5)s(2)U34. The polypeptide is tRNA uridine 5-carboxymethylaminomethyl modification enzyme MnmG (Streptococcus pyogenes serotype M2 (strain MGAS10270)).